Here is a 106-residue protein sequence, read N- to C-terminus: Insulin-like peptide 03 (106 aa).

Positions 1–18 (MLFYFGLAVIFLIDSSQT) are cleaved as a signal peptide. The propeptide occupies 19–34 (QTLYKVNEVGGSQVDR). 3 disulfides stabilise this stretch: Cys37/Cys93, Cys49/Cys106, and Cys92/Cys97. A propeptide spans 52–82 (KKRQNIPRKYGRDPNNILEKEEFAKRFLRVR) (c peptide).

Belongs to the insulin family.

It localises to the secreted. Functionally, insulin decreases blood glucose concentration. May have evolved to activate insulin receptors (INSR) in vertebrates. Molecular docking studies reveals unique interaction with the human insulin receptor. In vivo, insulin-like peptide injection reduces blood glucose levels in two models of zebrafish diabetes (streptozotocin- and glucose-induced). Also shorter swimming distance of zebrafish larvae, an effect which is not observed with human insulin. This Exaiptasia diaphana (Tropical sea anemone) protein is Insulin-like peptide 03.